The sequence spans 234 residues: MACPQLPPLLLLVLVVLLKAGVNYNTPFTDIVTSENSMETSPVSSLISSPFAHSTHSSGEPPKSYSSTMSLETDSITHLSPSSSGATPTIQPSPSSTDSRMIPSSPQPETITHPSSGSPSAELTPSSHSTLPSSESLTPHWSPTSHSPGTEPLTSTDQTLEPPGPAPGDTGPRELHRNPSVVVVVCLLVSLLLIGSVVMAVRFCHRNESKFENLDEVSMGSVNDRLSFAHHLQE.

An N-terminal signal peptide occupies residues 1–24 (MACPQLPPLLLLVLVVLLKAGVNY). The Extracellular portion of the chain corresponds to 25–180 (NTPFTDIVTS…GPRELHRNPS (156 aa)). The segment covering 41–121 (SPVSSLISSP…THPSSGSPSA (81 aa)) has biased composition (polar residues). The interval 41 to 174 (SPVSSLISSP…PAPGDTGPRE (134 aa)) is disordered. A compositionally biased stretch (low complexity) spans 122-140 (ELTPSSHSTLPSSESLTPH). Over residues 141 to 159 (WSPTSHSPGTEPLTSTDQT) the composition is skewed to polar residues. The chain crosses the membrane as a helical span at residues 181-201 (VVVVVCLLVSLLLIGSVVMAV). Residues 202–234 (RFCHRNESKFENLDEVSMGSVNDRLSFAHHLQE) lie on the Cytoplasmic side of the membrane.

The protein localises to the membrane. The sequence is that of Protein CIST1 from Homo sapiens (Human).